The primary structure comprises 445 residues: UPF0210 protein SP_0239 (445 aa).

This sequence belongs to the UPF0210 family. As to quaternary structure, homodimer.

The sequence is that of UPF0210 protein SP_0239 from Streptococcus pneumoniae serotype 4 (strain ATCC BAA-334 / TIGR4).